The chain runs to 582 residues: Putative phospholipase B-like 2 (582 aa).

A signal peptide spans 1–42; the sequence is MTRLIRSKKQFLIRSLHSVFYYLGSLLHSTFEMNVFIGLLLA. N-linked (GlcNAc...) asparagine glycosylation is found at Asn91, Asn141, Asn178, Asn224, and Asn318. A disulfide bridge connects residues Cys139 and Cys146. The cysteines at positions 480 and 482 are disulfide-linked. N-linked (GlcNAc...) asparagine glycosylation is present at Asn502.

This sequence belongs to the phospholipase B-like family.

The protein resides in the secreted. Putative phospholipase. This chain is Putative phospholipase B-like 2, found in Caenorhabditis elegans.